Consider the following 68-residue polypeptide: Large ribosomal subunit protein bL32 (68 aa).

This sequence belongs to the bacterial ribosomal protein bL32 family.

This is Large ribosomal subunit protein bL32 from Aster yellows witches'-broom phytoplasma (strain AYWB).